Reading from the N-terminus, the 220-residue chain is Large ribosomal subunit protein uL16 (220 aa).

The protein belongs to the universal ribosomal protein uL16 family. In terms of assembly, component of the small ribosomal subunit. Mature ribosomes consist of a small (40S) and a large (60S) subunit. The 40S subunit contains about 33 different proteins and 1 molecule of RNA (18S). The 60S subunit contains about 49 different proteins and 3 molecules of RNA (25S, 5.8S and 5S).

This is Large ribosomal subunit protein uL16 (RPL10) from Vitis riparia (Frost grape).